The following is a 244-amino-acid chain: Chalcone--flavanone isomerase (244 aa).

Residues Thr-45, Asn-110, and Ser-187 each coordinate substrate.

It belongs to the chalcone isomerase family.

It carries out the reaction a chalcone = a flavanone.. It participates in secondary metabolite biosynthesis; flavonoid biosynthesis. Catalyzes the intramolecular cyclization of bicyclic chalcones into tricyclic (S)-flavanones. Responsible for the isomerization of 4,2',4',6'-tetrahydroxychalcone (also termed chalcone) into naringenin. This Nicotiana tabacum (Common tobacco) protein is Chalcone--flavanone isomerase (CHI).